We begin with the raw amino-acid sequence, 161 residues long: RuBisCO chaperone RbcX (161 aa).

2 disordered regions span residues 1 to 20 (MQFM…KPME) and 130 to 161 (LGAE…SHAD). The span at 147-161 (DSATPDDASNASHAD) shows a compositional bias: polar residues.

Belongs to the RbcX family. Homodimer. Interacts with the exposed C-terminal peptide of endogenous RbcL ('Lys-460-Asp-470') via its central cleft, as well as C-terminal peptides from other cyanobacterial RbcL. Contacts a second RbcL monomer via its peripheral polar surface.

It is found in the carboxysome. It localises to the cytoplasm. Functionally, an RbcL-specific chaperone. The central cleft of the RbcX homodimer (RbcX2) binds the C-terminus of an RbcL monomer, stabilizing the C-terminus and probably preventing its reassociation with chaperonin GroEL-ES. At the same time the peripheral region of RbcX2 binds a second RbcL monomer, bridging the RbcL homodimers in the correct orientation. The RbcX2(2)-bound RbcL dimers then assemble into the RbcL8 core (RbcL8-(RbcX2)8). RbcS binding triggers the release of RbcX2. This chain is RuBisCO chaperone RbcX, found in Synechococcus sp. (strain ATCC 27144 / PCC 6301 / SAUG 1402/1) (Anacystis nidulans).